We begin with the raw amino-acid sequence, 164 residues long: uncharacterized protein (164 aa).

The region spanning 1–129 is the BFN domain; that stretch reads MGEVRVVGIR…AVLAQAGLLI (129 aa).

This is an uncharacterized protein from Mycobacterium tuberculosis (strain CDC 1551 / Oshkosh).